Here is a 150-residue protein sequence, read N- to C-terminus: D-aminoacyl-tRNA deacylase (150 aa).

Positions 138–139 (GP) match the Gly-cisPro motif, important for rejection of L-amino acids motif.

This sequence belongs to the DTD family. As to quaternary structure, homodimer.

The protein localises to the cytoplasm. It carries out the reaction glycyl-tRNA(Ala) + H2O = tRNA(Ala) + glycine + H(+). It catalyses the reaction a D-aminoacyl-tRNA + H2O = a tRNA + a D-alpha-amino acid + H(+). Its function is as follows. An aminoacyl-tRNA editing enzyme that deacylates mischarged D-aminoacyl-tRNAs. Also deacylates mischarged glycyl-tRNA(Ala), protecting cells against glycine mischarging by AlaRS. Acts via tRNA-based rather than protein-based catalysis; rejects L-amino acids rather than detecting D-amino acids in the active site. By recycling D-aminoacyl-tRNA to D-amino acids and free tRNA molecules, this enzyme counteracts the toxicity associated with the formation of D-aminoacyl-tRNA entities in vivo and helps enforce protein L-homochirality. This is D-aminoacyl-tRNA deacylase from Parabacteroides distasonis (strain ATCC 8503 / DSM 20701 / CIP 104284 / JCM 5825 / NCTC 11152).